Here is a 227-residue protein sequence, read N- to C-terminus: Cytochrome c oxidase subunit 2 (227 aa).

At 1–14 (MAYPLQLGFQDATS) the chain is on the mitochondrial intermembrane side. Residues 15-45 (PVMEELLHFHDHTLMIIFLISSLVLYIIMLM) form a helical membrane-spanning segment. Topologically, residues 46 to 59 (LTTKLIHTNMMNVQ) are mitochondrial matrix. The helical transmembrane segment at 60-87 (EMEMIWTILPAIILILIALPSLHTLYMM) threads the bilayer. Residues 88 to 227 (DEINNPLLTI…YFESWSASLA (140 aa)) are Mitochondrial intermembrane-facing. His-161, Cys-196, Glu-198, Cys-200, His-204, and Met-207 together coordinate Cu cation. Position 198 (Glu-198) interacts with Mg(2+). Tyr-218 carries the phosphotyrosine modification.

This sequence belongs to the cytochrome c oxidase subunit 2 family. In terms of assembly, component of the cytochrome c oxidase (complex IV, CIV), a multisubunit enzyme composed of 14 subunits. The complex is composed of a catalytic core of 3 subunits MT-CO1, MT-CO2 and MT-CO3, encoded in the mitochondrial DNA, and 11 supernumerary subunits COX4I, COX5A, COX5B, COX6A, COX6B, COX6C, COX7A, COX7B, COX7C, COX8 and NDUFA4, which are encoded in the nuclear genome. The complex exists as a monomer or a dimer and forms supercomplexes (SCs) in the inner mitochondrial membrane with NADH-ubiquinone oxidoreductase (complex I, CI) and ubiquinol-cytochrome c oxidoreductase (cytochrome b-c1 complex, complex III, CIII), resulting in different assemblies (supercomplex SCI(1)III(2)IV(1) and megacomplex MCI(2)III(2)IV(2)). Found in a complex with TMEM177, COA6, COX18, COX20, SCO1 and SCO2. Interacts with TMEM177 in a COX20-dependent manner. Interacts with COX20. Interacts with COX16. Cu cation serves as cofactor.

It localises to the mitochondrion inner membrane. It catalyses the reaction 4 Fe(II)-[cytochrome c] + O2 + 8 H(+)(in) = 4 Fe(III)-[cytochrome c] + 2 H2O + 4 H(+)(out). Functionally, component of the cytochrome c oxidase, the last enzyme in the mitochondrial electron transport chain which drives oxidative phosphorylation. The respiratory chain contains 3 multisubunit complexes succinate dehydrogenase (complex II, CII), ubiquinol-cytochrome c oxidoreductase (cytochrome b-c1 complex, complex III, CIII) and cytochrome c oxidase (complex IV, CIV), that cooperate to transfer electrons derived from NADH and succinate to molecular oxygen, creating an electrochemical gradient over the inner membrane that drives transmembrane transport and the ATP synthase. Cytochrome c oxidase is the component of the respiratory chain that catalyzes the reduction of oxygen to water. Electrons originating from reduced cytochrome c in the intermembrane space (IMS) are transferred via the dinuclear copper A center (CU(A)) of subunit 2 and heme A of subunit 1 to the active site in subunit 1, a binuclear center (BNC) formed by heme A3 and copper B (CU(B)). The BNC reduces molecular oxygen to 2 water molecules using 4 electrons from cytochrome c in the IMS and 4 protons from the mitochondrial matrix. The polypeptide is Cytochrome c oxidase subunit 2 (MT-CO2) (Elephas maximus (Indian elephant)).